A 403-amino-acid chain; its full sequence is Phosphopentomutase (403 aa).

Mn(2+) contacts are provided by Asp-13, Asp-298, His-303, Asp-339, His-340, and His-351.

The protein belongs to the phosphopentomutase family. Mn(2+) is required as a cofactor.

It is found in the cytoplasm. It catalyses the reaction 2-deoxy-alpha-D-ribose 1-phosphate = 2-deoxy-D-ribose 5-phosphate. The catalysed reaction is alpha-D-ribose 1-phosphate = D-ribose 5-phosphate. It functions in the pathway carbohydrate degradation; 2-deoxy-D-ribose 1-phosphate degradation; D-glyceraldehyde 3-phosphate and acetaldehyde from 2-deoxy-alpha-D-ribose 1-phosphate: step 1/2. In terms of biological role, isomerase that catalyzes the conversion of deoxy-ribose 1-phosphate (dRib-1-P) and ribose 1-phosphate (Rib-1-P) to deoxy-ribose 5-phosphate (dRib-5-P) and ribose 5-phosphate (Rib-5-P), respectively. The sequence is that of Phosphopentomutase from Streptococcus gordonii (strain Challis / ATCC 35105 / BCRC 15272 / CH1 / DL1 / V288).